Consider the following 92-residue polypeptide: Small ribosomal subunit protein uS19 (92 aa).

The protein belongs to the universal ribosomal protein uS19 family.

In terms of biological role, protein S19 forms a complex with S13 that binds strongly to the 16S ribosomal RNA. In Magnetococcus marinus (strain ATCC BAA-1437 / JCM 17883 / MC-1), this protein is Small ribosomal subunit protein uS19.